We begin with the raw amino-acid sequence, 291 residues long: Protease HtpX homolog (291 aa).

The next 2 membrane-spanning stretches (helical) occupy residues 4 to 24 (ILLF…VASL) and 39 to 59 (SALL…SLLI). Position 144 (histidine 144) interacts with Zn(2+). The active site involves glutamate 145. Histidine 148 is a Zn(2+) binding site. 2 helical membrane-spanning segments follow: residues 159–179 (LIQG…GYAV) and 199–219 (VSTI…VAWF). Glutamate 224 contacts Zn(2+).

The protein belongs to the peptidase M48B family. The cofactor is Zn(2+).

It is found in the cell inner membrane. In Polaromonas naphthalenivorans (strain CJ2), this protein is Protease HtpX homolog.